The chain runs to 323 residues: DNA primase small subunit PriS (323 aa).

Active-site residues include Asp-97, Asp-99, and Asp-274.

Belongs to the eukaryotic-type primase small subunit family. Heterodimer of a small subunit (PriS) and a large subunit (PriL). It depends on Mg(2+) as a cofactor. Requires Mn(2+) as cofactor.

Functionally, catalytic subunit of DNA primase, an RNA polymerase that catalyzes the synthesis of short RNA molecules used as primers for DNA polymerase during DNA replication. The small subunit contains the primase catalytic core and has DNA synthesis activity on its own. Binding to the large subunit stabilizes and modulates the activity, increasing the rate of DNA synthesis while decreasing the length of the DNA fragments, and conferring RNA synthesis capability. The DNA polymerase activity may enable DNA primase to also catalyze primer extension after primer synthesis. May also play a role in DNA repair. The polypeptide is DNA primase small subunit PriS (Methanothermobacter thermautotrophicus (strain ATCC 29096 / DSM 1053 / JCM 10044 / NBRC 100330 / Delta H) (Methanobacterium thermoautotrophicum)).